Reading from the N-terminus, the 137-residue chain is Protein shisa-5 (137 aa).

A helical membrane pass occupies residues 3-23 (FGATLAVGLTIFVLSVVTIII).

The protein belongs to the shisa family. As to quaternary structure, interacts with PDCD6; PDCD6 can stabilize SHISA5.

The protein resides in the endoplasmic reticulum membrane. It localises to the nucleus membrane. Its function is as follows. Can induce apoptosis in a caspase-dependent manner and plays a role in p53/TP53-dependent apoptosis. The sequence is that of Protein shisa-5 (SHISA5) from Pongo abelii (Sumatran orangutan).